Here is a 95-residue protein sequence, read N- to C-terminus: ESAT-6-like protein EsxH (95 aa).

Belongs to the WXG100 family. ESAT-6 subfamily. Forms a tight 1:1 complex with EsxG.

The protein localises to the secreted. In Mycolicibacterium smegmatis (strain ATCC 700084 / mc(2)155) (Mycobacterium smegmatis), this protein is ESAT-6-like protein EsxH.